The following is a 507-amino-acid chain: Histidine--tRNA ligase (507 aa).

The protein belongs to the class-II aminoacyl-tRNA synthetase family. In terms of assembly, homodimer.

The protein resides in the cytoplasm. The enzyme catalyses tRNA(His) + L-histidine + ATP = L-histidyl-tRNA(His) + AMP + diphosphate + H(+). This is Histidine--tRNA ligase from Rhizobium leguminosarum bv. trifolii (strain WSM2304).